Here is a 166-residue protein sequence, read N- to C-terminus: Large ribosomal subunit protein uL10 (166 aa).

It belongs to the universal ribosomal protein uL10 family. As to quaternary structure, part of the ribosomal stalk of the 50S ribosomal subunit. The N-terminus interacts with L11 and the large rRNA to form the base of the stalk. The C-terminus forms an elongated spine to which L12 dimers bind in a sequential fashion forming a multimeric L10(L12)X complex.

In terms of biological role, forms part of the ribosomal stalk, playing a central role in the interaction of the ribosome with GTP-bound translation factors. This chain is Large ribosomal subunit protein uL10, found in Streptococcus pneumoniae (strain 70585).